Reading from the N-terminus, the 206-residue chain is LexA repressor (206 aa).

The segment at residues 28–48 (RAEIATRLGFKSANAAEEHLK) is a DNA-binding region (H-T-H motif). Active-site for autocatalytic cleavage activity residues include Ser-123 and Lys-160.

It belongs to the peptidase S24 family. In terms of assembly, homodimer.

It catalyses the reaction Hydrolysis of Ala-|-Gly bond in repressor LexA.. Represses a number of genes involved in the response to DNA damage (SOS response), including recA and lexA. In the presence of single-stranded DNA, RecA interacts with LexA causing an autocatalytic cleavage which disrupts the DNA-binding part of LexA, leading to derepression of the SOS regulon and eventually DNA repair. The protein is LexA repressor of Shewanella sp. (strain MR-7).